A 341-amino-acid chain; its full sequence is Mytilin-2 (341 aa).

Residues 1–24 form the signal peptide; it reads MFKQSYQLCLVFLLFVCFYQSVKG.

Component of the organic matrix of calcified shell layers like nacre and prisms.

Its subcellular location is the secreted. This Mytilus californianus (California mussel) protein is Mytilin-2.